The primary structure comprises 234 residues: MELIVSILWLAITAENLANTLATNYCNLQSCKRNNAIHTMCQYTSPTPGPMCLEYSNVGFTDAEKDAIVNKHNELRQRVASGKEMRGTNGPQPPAVKMPNLTWDPELATIAQRWANQCTFEHDACRNVERFAVGQNIAATSSSGKNKSTPNEMILLWYNEVKDFDNRWISSFPSDDNILMKVGHYTQIVWAKTTKIGCGRIMFKEPDNWTKHYLVCNYGPAGNVLGAPIYEIKK.

Residues 1-22 (MELIVSILWLAITAENLANTLA) form the signal peptide. Disulfide bonds link cysteine 26–cysteine 41, cysteine 31–cysteine 125, cysteine 52–cysteine 118, and cysteine 198–cysteine 216. In terms of domain architecture, SCP spans 69–218 (VNKHNELRQR…WTKHYLVCNY (150 aa)). A disordered region spans residues 80–99 (ASGKEMRGTNGPQPPAVKMP).

It belongs to the CRISP family. As to expression, expressed by the venom gland.

The protein localises to the secreted. The protein is Venom allergen 3 of Solenopsis invicta (Red imported fire ant).